Reading from the N-terminus, the 305-residue chain is Sulfate adenylyltransferase subunit 2 (305 aa).

Belongs to the PAPS reductase family. CysD subfamily. As to quaternary structure, heterodimer composed of CysD, the smaller subunit, and CysN.

The enzyme catalyses sulfate + ATP + H(+) = adenosine 5'-phosphosulfate + diphosphate. It participates in sulfur metabolism; hydrogen sulfide biosynthesis; sulfite from sulfate: step 1/3. With CysN forms the ATP sulfurylase (ATPS) that catalyzes the adenylation of sulfate producing adenosine 5'-phosphosulfate (APS) and diphosphate, the first enzymatic step in sulfur assimilation pathway. APS synthesis involves the formation of a high-energy phosphoric-sulfuric acid anhydride bond driven by GTP hydrolysis by CysN coupled to ATP hydrolysis by CysD. This is Sulfate adenylyltransferase subunit 2 from Pseudomonas syringae pv. tomato (strain ATCC BAA-871 / DC3000).